A 273-amino-acid polypeptide reads, in one-letter code: Cytoplasmic phosphatidylinositol transfer protein 1 (273 aa).

Residues 244–273 (QAETNEKIHNTSGGANAAANAKEANDGDID) are disordered.

Belongs to the PtdIns transfer protein family. PI transfer class IIB subfamily.

Functionally, phosphatidylinositol transfer proteins mediate the monomeric transport of lipids by shielding a lipid from the aqueous environment and binding the lipid in a hydrophobic cavity. This is Cytoplasmic phosphatidylinositol transfer protein 1 (rdgBbeta) from Drosophila melanogaster (Fruit fly).